A 92-amino-acid polypeptide reads, in one-letter code: MNRLLQRRLFLENLLVGVNSTFHQMQKHSINTCCRSLQRILDHLILLQTIHSPAFRLDRMQLRQMRTLACLWIHRRNHDLQATLDAINWISP.

Belongs to the rotavirus A NSP6 family. As to quaternary structure, interacts with NSP2 and NSP5.

The protein localises to the host cytoplasm. The protein resides in the host mitochondrion. The protein is Non-structural protein 6 of Rotavirus A (strain RVA/Human/United Kingdom/ST3/1975/G4P2A[6]) (RV-A).